The chain runs to 96 residues: Protein Vpr (96 aa).

The interval 1 to 42 (MEQAPEDQGPQREPHNEWTLELLEELKNEAVRHFPRIWLHGL) is homooligomerization. S79, S94, and S96 each carry phosphoserine; by host.

It belongs to the HIV-1 VPR protein family. Homooligomer, may form homodimer. Interacts with p6-gag region of the Pr55 Gag precursor protein through a (Leu-X-X)4 motif near the C-terminus of the P6gag protein. Interacts with host UNG. May interact with host RAD23A/HHR23A. Interacts with host VPRBP/DCAF1, leading to hijack the CUL4A-RBX1-DDB1-DCAF1/VPRBP complex, mediating ubiquitination of host proteins such as TERT and ZGPAT and arrest of the cell cycle in G2 phase. Phosphorylated on several residues by host. These phosphorylations regulate VPR activity for the nuclear import of the HIV-1 pre-integration complex.

It localises to the virion. Its subcellular location is the host nucleus. The protein localises to the host extracellular space. Its function is as follows. During virus entry, plays a role in the transport of the viral pre-integration (PIC) complex to the host nucleus. This function is crucial for viral infection of non-dividing macrophages. May act directly at the nuclear pore complex, by binding nucleoporins phenylalanine-glycine (FG)-repeat regions. Functionally, during virus replication, may deplete host UNG protein, and incude G2-M cell cycle arrest. Acts by targeting specific host proteins for degradation by the 26S proteasome, through association with the cellular CUL4A-DDB1 E3 ligase complex by direct interaction with host VPRPB/DCAF-1. Cell cycle arrest reportedly occurs within hours of infection and is not blocked by antiviral agents, suggesting that it is initiated by the VPR carried into the virion. Additionally, VPR induces apoptosis in a cell cycle dependent manner suggesting that these two effects are mechanistically linked. Detected in the serum and cerebrospinal fluid of AIDS patient, VPR may also induce cell death to bystander cells. This Human immunodeficiency virus type 1 group M subtype B (isolate BRU/LAI) (HIV-1) protein is Protein Vpr.